Here is a 336-residue protein sequence, read N- to C-terminus: UPF0284 protein Pcal_1534 (336 aa).

It belongs to the UPF0284 family.

The chain is UPF0284 protein Pcal_1534 from Pyrobaculum calidifontis (strain DSM 21063 / JCM 11548 / VA1).